A 232-amino-acid chain; its full sequence is Flagellar L-ring protein (232 aa).

An N-terminal signal peptide occupies residues 1–21; it reads MQKNAAHTYAISSLLVLSLTG. C22 is lipidated: N-palmitoyl cysteine. C22 carries the S-diacylglycerol cysteine lipid modification.

This sequence belongs to the FlgH family. The basal body constitutes a major portion of the flagellar organelle and consists of four rings (L,P,S, and M) mounted on a central rod.

It is found in the cell outer membrane. It localises to the bacterial flagellum basal body. In terms of biological role, assembles around the rod to form the L-ring and probably protects the motor/basal body from shearing forces during rotation. In Escherichia coli O6:H1 (strain CFT073 / ATCC 700928 / UPEC), this protein is Flagellar L-ring protein.